The following is a 365-amino-acid chain: MEPELTVPPLFSPIRQAIHPKHADIDVQTAAWAETFRIGSEELRGKLVTQDIGTFSARILPEGREEVVSLLADFILWLFGVDDGHCEEGELGHRPGDLAGLLHRLIRVAQNPEAPMMQDDPLAAGLRDLRMRVDRFGTAGQTARWVDALREYFFSVVWEAAHRRAGTVPDLNDYTLMRLYDGATSVVLPMLEMGHGYELQPYERDRTAVRAVAEMASFIITWDNDIFSYHKERRGSGYYLNALRVLEQERGLTPAQALDAAISQRDRVMCLFTTVSEQLAEQGSPQLRQYLHSLRCFIRGAQDWGISSVRYTTPDDPANMPSVFTDVPTDDSTEPLDIPAVSWWWDLLAEDARSVRRQVPAQRSA.

The Mg(2+) site is built by aspartate 82 and glutamate 87. The DDXXXE motif motif lies at 82 to 87; the sequence is DDGHCE. Residue arginine 178 coordinates substrate. Mg(2+)-binding residues include asparagine 224 and serine 228. Lysine 231 is a binding site for substrate. A Mg(2+)-binding site is contributed by glutamate 232. Residue 310 to 311 participates in substrate binding; that stretch reads RY.

This sequence belongs to the terpene synthase family. As to quaternary structure, monomer. The cofactor is Mg(2+).

It catalyses the reaction (2E,6E)-farnesyl diphosphate = selina-4(15),7(11)-diene + diphosphate. The protein operates within secondary metabolite biosynthesis; terpenoid biosynthesis. Functionally, catalyzes the conversion of (2E,6E)-farnesyl diphosphate (FPP) to yield the bicyclic sesquiterpene selina-4(15),7(11)-diene via a 1,10-cyclization, which requires the abstraction of the pyrophosphate from FPP leading to a (E,E)-germacradienyl cation. The only accepted substrate is (2E,6E)-farnesyl diphosphate (FPP). This chain is Selina-4(15),7(11)-diene synthase ((2E,6E)-farnesyl diphosphate cyclizing), found in Streptomyces pristinaespiralis (strain ATCC 25486 / DSM 40338 / CBS 914.69 / JCM 4507 / KCC S-0507 / NBRC 13074 / NRRL 2958 / 5647).